The chain runs to 253 residues: Hydroxyacylglutathione hydrolase (253 aa).

Zn(2+) contacts are provided by His59, His61, Asp63, His64, His118, Asp143, and His181.

It belongs to the metallo-beta-lactamase superfamily. Glyoxalase II family. Monomer. Zn(2+) serves as cofactor.

The catalysed reaction is an S-(2-hydroxyacyl)glutathione + H2O = a 2-hydroxy carboxylate + glutathione + H(+). Its pathway is secondary metabolite metabolism; methylglyoxal degradation; (R)-lactate from methylglyoxal: step 2/2. In terms of biological role, thiolesterase that catalyzes the hydrolysis of S-D-lactoyl-glutathione to form glutathione and D-lactic acid. This chain is Hydroxyacylglutathione hydrolase, found in Prochlorococcus marinus (strain MIT 9211).